A 1111-amino-acid polypeptide reads, in one-letter code: Isoleucine--tRNA ligase (1111 aa).

A 'HIGH' region motif is present at residues 52–62 (PFANGLPHYGH). The 'KMSKS' region signature appears at 645 to 649 (KLSKR). ATP is bound at residue Lys648.

Belongs to the class-I aminoacyl-tRNA synthetase family. IleS type 2 subfamily. As to quaternary structure, monomer. Requires Zn(2+) as cofactor.

The protein localises to the cytoplasm. It catalyses the reaction tRNA(Ile) + L-isoleucine + ATP = L-isoleucyl-tRNA(Ile) + AMP + diphosphate. Its function is as follows. Catalyzes the attachment of isoleucine to tRNA(Ile). As IleRS can inadvertently accommodate and process structurally similar amino acids such as valine, to avoid such errors it has two additional distinct tRNA(Ile)-dependent editing activities. One activity is designated as 'pretransfer' editing and involves the hydrolysis of activated Val-AMP. The other activity is designated 'posttransfer' editing and involves deacylation of mischarged Val-tRNA(Ile). This chain is Isoleucine--tRNA ligase, found in Wolbachia pipientis wMel.